The sequence spans 122 residues: uncharacterized protein (122 aa).

This is an uncharacterized protein from Saccharomyces cerevisiae (strain ATCC 204508 / S288c) (Baker's yeast).